A 624-amino-acid polypeptide reads, in one-letter code: uncharacterized protein (624 aa).

An N-terminal signal peptide occupies residues 1–29; that stretch reads MRFHRQGTAATVGVLLIVLLGFCWKLSES. N-linked (GlcNAc...) asparagine glycosylation is found at Asn-68, Asn-150, Asn-219, Asn-366, Asn-441, Asn-447, Asn-464, and Asn-528. Residues 141–174 form a disordered region; that stretch reads LERRHGRFGNGTHGDHPKGPPPPPPPDEKDRGSQ.

It localises to the secreted. This is an uncharacterized protein from Saccharomyces cerevisiae (strain ATCC 204508 / S288c) (Baker's yeast).